A 352-amino-acid chain; its full sequence is Selenide, water dikinase (352 aa).

The active site involves Cys23. ATP contacts are provided by residues Lys26 and 54–56; that span reads SRD. Asp57 serves as a coordination point for Mg(2+). Residues Asp74, Asp97, and 145 to 147 each bind ATP; that span reads GHS. A Mg(2+)-binding site is contributed by Asp97. Asp233 is a Mg(2+) binding site.

It belongs to the selenophosphate synthase 1 family. Class I subfamily. Homodimer. It depends on Mg(2+) as a cofactor.

The enzyme catalyses hydrogenselenide + ATP + H2O = selenophosphate + AMP + phosphate + 2 H(+). Functionally, synthesizes selenophosphate from selenide and ATP. This chain is Selenide, water dikinase, found in Shewanella putrefaciens (strain CN-32 / ATCC BAA-453).